A 142-amino-acid chain; its full sequence is Transcriptional regulator MraZ (142 aa).

2 SpoVT-AbrB domains span residues 5–51 and 77–120; these read ASSL…PRPE and AMDV…DKAS.

This sequence belongs to the MraZ family. Forms oligomers.

The protein resides in the cytoplasm. It localises to the nucleoid. The polypeptide is Transcriptional regulator MraZ (Verminephrobacter eiseniae (strain EF01-2)).